Reading from the N-terminus, the 286-residue chain is ATP synthase gamma chain (286 aa).

The protein belongs to the ATPase gamma chain family. F-type ATPases have 2 components, CF(1) - the catalytic core - and CF(0) - the membrane proton channel. CF(1) has five subunits: alpha(3), beta(3), gamma(1), delta(1), epsilon(1). CF(0) has three main subunits: a, b and c.

It is found in the cell inner membrane. Its function is as follows. Produces ATP from ADP in the presence of a proton gradient across the membrane. The gamma chain is believed to be important in regulating ATPase activity and the flow of protons through the CF(0) complex. This chain is ATP synthase gamma chain, found in Shewanella loihica (strain ATCC BAA-1088 / PV-4).